The chain runs to 181 residues: Inner membrane-spanning protein YciB (181 aa).

The next 5 membrane-spanning stretches (helical) occupy residues leucine 3–tyrosine 23, serine 54–isoleucine 74, isoleucine 81–isoleucine 101, leucine 119–tyrosine 139, and phenylalanine 149–leucine 169.

It belongs to the YciB family.

Its subcellular location is the cell inner membrane. Plays a role in cell envelope biogenesis, maintenance of cell envelope integrity and membrane homeostasis. The sequence is that of Inner membrane-spanning protein YciB from Legionella pneumophila subsp. pneumophila (strain Philadelphia 1 / ATCC 33152 / DSM 7513).